Reading from the N-terminus, the 197-residue chain is Imidazoleglycerol-phosphate dehydratase (197 aa).

It belongs to the imidazoleglycerol-phosphate dehydratase family.

It localises to the cytoplasm. It catalyses the reaction D-erythro-1-(imidazol-4-yl)glycerol 3-phosphate = 3-(imidazol-4-yl)-2-oxopropyl phosphate + H2O. It participates in amino-acid biosynthesis; L-histidine biosynthesis; L-histidine from 5-phospho-alpha-D-ribose 1-diphosphate: step 6/9. The protein is Imidazoleglycerol-phosphate dehydratase of Teredinibacter turnerae (strain ATCC 39867 / T7901).